A 97-amino-acid chain; its full sequence is MKLICSIYKSPRKDGMYLYVDKRDALKRVPEGLLAAFGAPQLAFELVLTPERQLAREDINKVLANIEAQGYHLQMPPAEDEYIEHLPEELLRMNDPM.

A YcgL domain is found at Leu-3–Pro-87.

In Stutzerimonas stutzeri (strain A1501) (Pseudomonas stutzeri), this protein is YcgL domain-containing protein PST_1364.